The following is a 193-amino-acid chain: MATPASTPDTRALVADFVGYKLRQKGYVCGAGPGEGPAADPLHQAMRAAGDEFETRFRRTFSDLAAQLHVTPGSAQQRFTQVSDELFQGGPNWGRLVAFFVFGAALCAESVNKEMEPLVGQVQDWMVAYLETRLADWIHSSGGWAEFTALYGDGALEEARRLREGNWASVRTVLTGAVALGALVTVGAFFASK.

Ala2 is modified (N-acetylalanine). Positions 9–29 match the BH4 motif; sequence DTRALVADFVGYKLRQKGYVC. A BH1 motif is present at residues 85–104; that stretch reads ELFQGGPNWGRLVAFFVFGA. Residues 136–151 carry the BH2 motif; the sequence is DWIHSSGGWAEFTALY.

It belongs to the Bcl-2 family. Interacts with HIF3A isoform 2 (via C-terminus domain). Interacts with BOP. In terms of tissue distribution, expressed in almost all myeloid cell lines and in a wide range of tissues, with highest levels in brain, colon, and salivary gland.

The protein resides in the mitochondrion membrane. In terms of biological role, promotes cell survival. Blocks dexamethasone-induced apoptosis. Mediates survival of postmitotic Sertoli cells by suppressing death-promoting activity of BAX. The sequence is that of Bcl-2-like protein 2 (Bcl2l2) from Mus musculus (Mouse).